The following is a 409-amino-acid chain: Phospho-N-acetylmuramoyl-pentapeptide-transferase (409 aa).

The next 10 membrane-spanning stretches (helical) occupy residues 23–43, 73–93, 95–115, 132–152, 214–234, 247–267, 279–299, 305–325, 331–351, and 386–406; these read YITF…TIFG, TPTM…LLLA, LNNI…AIGF, GIFK…TLYF, YAWL…SNGA, TSAI…NVIF, SGEM…FLWY, AVFM…VLAI, MLIP…VLQV, and KIVT…IVTL.

This sequence belongs to the glycosyltransferase 4 family. MraY subfamily. Mg(2+) serves as cofactor.

The protein localises to the cell inner membrane. It carries out the reaction UDP-N-acetyl-alpha-D-muramoyl-L-alanyl-gamma-D-glutamyl-meso-2,6-diaminopimeloyl-D-alanyl-D-alanine + di-trans,octa-cis-undecaprenyl phosphate = di-trans,octa-cis-undecaprenyl diphospho-N-acetyl-alpha-D-muramoyl-L-alanyl-D-glutamyl-meso-2,6-diaminopimeloyl-D-alanyl-D-alanine + UMP. The protein operates within cell wall biogenesis; peptidoglycan biosynthesis. Catalyzes the initial step of the lipid cycle reactions in the biosynthesis of the cell wall peptidoglycan: transfers peptidoglycan precursor phospho-MurNAc-pentapeptide from UDP-MurNAc-pentapeptide onto the lipid carrier undecaprenyl phosphate, yielding undecaprenyl-pyrophosphoryl-MurNAc-pentapeptide, known as lipid I. The protein is Phospho-N-acetylmuramoyl-pentapeptide-transferase of Flavobacterium psychrophilum (strain ATCC 49511 / DSM 21280 / CIP 103535 / JIP02/86).